Reading from the N-terminus, the 156-residue chain is Ribosome maturation factor RimP (156 aa).

The protein belongs to the RimP family.

The protein resides in the cytoplasm. In terms of biological role, required for maturation of 30S ribosomal subunits. In Bacillus velezensis (strain DSM 23117 / BGSC 10A6 / LMG 26770 / FZB42) (Bacillus amyloliquefaciens subsp. plantarum), this protein is Ribosome maturation factor RimP.